We begin with the raw amino-acid sequence, 331 residues long: Tryptophan--tRNA ligase (331 aa).

ATP is bound by residues 10–12 (QPS) and 18–19 (GN). The short motif at 11–19 (PSGQLTLGN) is the 'HIGH' region element. Asp-133 contributes to the L-tryptophan binding site. ATP contacts are provided by residues 145–147 (GED), Val-184, and 193–197 (KMSKS). Residues 193 to 197 (KMSKS) carry the 'KMSKS' region motif.

The protein belongs to the class-I aminoacyl-tRNA synthetase family. Homodimer.

The protein resides in the cytoplasm. The enzyme catalyses tRNA(Trp) + L-tryptophan + ATP = L-tryptophyl-tRNA(Trp) + AMP + diphosphate + H(+). Functionally, catalyzes the attachment of tryptophan to tRNA(Trp). The sequence is that of Tryptophan--tRNA ligase from Listeria monocytogenes serovar 1/2a (strain ATCC BAA-679 / EGD-e).